A 245-amino-acid chain; its full sequence is Tetraspanin-6 (245 aa).

Residues 1-19 are Cytoplasmic-facing; that stretch reads MASPSRRLQTKPVITCFKS. A helical transmembrane segment spans residues 20 to 40; the sequence is VLLIYTFIFWITGVILLAVGI. Residues 41–59 lie on the Extracellular side of the membrane; it reads WGKVSLENYFSLLNEKATN. Residues 60–80 form a helical membrane-spanning segment; it reads VPFVLIATGTVIILLGTFGCF. At 81-93 the chain is on the cytoplasmic side; the sequence is ATCRASAWMLKLY. The helical transmembrane segment at 94 to 114 threads the bilayer; that stretch reads AMFLTLIFLVELVAAIVGFVF. At 115–208 the chain is on the extracellular side; it reads RHEIKNSFKN…IKVMTIIESE (94 aa). Asparagine 134 is a glycosylation site (N-linked (GlcNAc...) asparagine). A helical transmembrane segment spans residues 209 to 229; it reads MGVVAGISFGVACFQLIGIFL. Topologically, residues 230-245 are cytoplasmic; the sequence is AYCLSRAITNNQYEIV.

This sequence belongs to the tetraspanin (TM4SF) family.

Its subcellular location is the membrane. The sequence is that of Tetraspanin-6 (TSPAN6) from Pongo abelii (Sumatran orangutan).